A 356-amino-acid polypeptide reads, in one-letter code: Serine/arginine-rich splicing factor RS41 (356 aa).

RRM domains lie at 2–74 and 96–167; these read KPVF…WTKN and KTLF…YAVK. The interval 73–92 is disordered; the sequence is KNDRGGAGRSGGSRRSSSGL. A compositionally biased stretch (basic and acidic residues) spans 168-186; that stretch reads DDDSRGNGYSPERRRDRSP. Residues 168–356 form a disordered region; the sequence is DDDSRGNGYS…SPSRSPPAEE (189 aa). Phosphoserine is present on residues serine 192, serine 194, serine 210, serine 239, serine 254, and serine 274. The segment covering 238-253 has biased composition (basic and acidic residues); sequence LSPDYKRDDRRRERVA. 3 consecutive repeat copies span residues 267 to 278, 279 to 290, and 291 to 302. Residues 267-307 form a 4 X 12 AA tandem repeats of [KE]-[GK]-R -[GR]-E-S-R-S-P-P-P-Y region; that stretch reads KGRGESRSPPPYEKRRESRSPPPYEKRRESRSPPPYEKRRE. A compositionally biased stretch (basic and acidic residues) spans 268-306; the sequence is GRGESRSPPPYEKRRESRSPPPYEKRRESRSPPPYEKRR. A 4; truncated repeat occupies 303 to 307; that stretch reads EKRRE. Phosphoserine occurs at positions 309, 324, 342, 347, and 351.

Belongs to the splicing factor SR family. RS subfamily. In terms of assembly, component of the spliceosome. Interacts with RCF3 and CPL1. Interacts with DRB1/HYL1 and SE. In terms of tissue distribution, leaves, stem, roots and flowers.

It is found in the nucleus. The protein localises to the nucleus speckle. Its function is as follows. Required for constitutive and alternative pre-mRNA splicing. Involved in primary miRNA processing and pri-miRNA biogenesis. Binds both intronless and intron-containing pri-miRNAs. This chain is Serine/arginine-rich splicing factor RS41 (RS41), found in Arabidopsis thaliana (Mouse-ear cress).